Consider the following 67-residue polypeptide: Large ribosomal subunit protein uL29 (67 aa).

This sequence belongs to the universal ribosomal protein uL29 family.

In Wolbachia pipientis wMel, this protein is Large ribosomal subunit protein uL29.